Here is a 311-residue protein sequence, read N- to C-terminus: Small ribosomal subunit biogenesis GTPase RsgA (311 aa).

Residues 88–246 enclose the CP-type G domain; it reads SKEKEQVIVA…VIDTPGIREF (159 aa). GTP contacts are provided by residues 137–140 and 188–196; these read NKID and GHSGVGKST. Cys270, Cys275, His277, and Cys283 together coordinate Zn(2+).

This sequence belongs to the TRAFAC class YlqF/YawG GTPase family. RsgA subfamily. As to quaternary structure, monomer. Associates with 30S ribosomal subunit, binds 16S rRNA. Zn(2+) is required as a cofactor.

It localises to the cytoplasm. In terms of biological role, one of several proteins that assist in the late maturation steps of the functional core of the 30S ribosomal subunit. Helps release RbfA from mature subunits. May play a role in the assembly of ribosomal proteins into the subunit. Circularly permuted GTPase that catalyzes slow GTP hydrolysis, GTPase activity is stimulated by the 30S ribosomal subunit. This Chlorobaculum tepidum (strain ATCC 49652 / DSM 12025 / NBRC 103806 / TLS) (Chlorobium tepidum) protein is Small ribosomal subunit biogenesis GTPase RsgA.